A 188-amino-acid chain; its full sequence is dCTP deaminase (188 aa).

Residues 111 to 116 (KSTYAR), 135 to 137 (TLE), Gln-156, Tyr-170, Lys-179, and Gln-180 each bind dCTP. Catalysis depends on Glu-137, which acts as the Proton donor/acceptor.

The protein belongs to the dCTP deaminase family. Homotrimer.

It carries out the reaction dCTP + H2O + H(+) = dUTP + NH4(+). Its pathway is pyrimidine metabolism; dUMP biosynthesis; dUMP from dCTP (dUTP route): step 1/2. Functionally, catalyzes the deamination of dCTP to dUTP. The protein is dCTP deaminase of Rickettsia canadensis (strain McKiel).